A 398-amino-acid chain; its full sequence is Phosphoglycerate kinase (398 aa).

Substrate is bound by residues aspartate 21–asparagine 23, arginine 36, histidine 59–arginine 62, arginine 117, and arginine 150. Residues lysine 200, glutamate 321, and glycine 351–serine 354 contribute to the ATP site.

This sequence belongs to the phosphoglycerate kinase family. In terms of assembly, monomer.

It localises to the cytoplasm. The enzyme catalyses (2R)-3-phosphoglycerate + ATP = (2R)-3-phospho-glyceroyl phosphate + ADP. Its pathway is carbohydrate degradation; glycolysis; pyruvate from D-glyceraldehyde 3-phosphate: step 2/5. The sequence is that of Phosphoglycerate kinase from Wolbachia pipientis wMel.